A 139-amino-acid chain; its full sequence is Proline-rich protein 13 (139 aa).

The segment at 1–139 (MWNPSAGPNP…SSSSSSSDSD (139 aa)) is disordered. 2 stretches are compositionally biased toward pro residues: residues 24-62 (ACPPSQNPAFPPGPCPPGIPQGNPAFPPCRPPYPVPQPG) and 70-91 (GPYPPPYPPAAPGMCPVNPPAP). The span at 103-124 (KTRKKMKKAHKKSHKHHKHGKH) shows a compositional bias: basic residues. Low complexity predominate over residues 125-139 (SSSSSSSSSSSSDSD).

It is found in the nucleus. Functionally, negatively regulates TSP1 expression at the level of transcription. This down-regulation was shown to reduce taxane-induced apoptosis. In Rattus norvegicus (Rat), this protein is Proline-rich protein 13 (Prr13).